Reading from the N-terminus, the 76-residue chain is DNA-directed RNA polymerase subunit epsilon (76 aa).

It belongs to the RNA polymerase subunit epsilon family. As to quaternary structure, RNAP is composed of a core of 2 alpha, a beta and a beta' subunit. The core is associated with a delta subunit, and at least one of epsilon or omega. When a sigma factor is associated with the core the holoenzyme is formed, which can initiate transcription.

The catalysed reaction is RNA(n) + a ribonucleoside 5'-triphosphate = RNA(n+1) + diphosphate. Functionally, a non-essential component of RNA polymerase (RNAP). The protein is DNA-directed RNA polymerase subunit epsilon of Lactococcus lactis subsp. lactis (strain IL1403) (Streptococcus lactis).